The chain runs to 319 residues: Coproporphyrin III ferrochelatase 2 (319 aa).

Residues tyrosine 13, arginine 30, 46–47 (RY), serine 54, and tyrosine 125 each bind Fe-coproporphyrin III. Residues histidine 181 and glutamate 262 each coordinate Fe(2+).

It belongs to the ferrochelatase family.

It is found in the cytoplasm. The catalysed reaction is Fe-coproporphyrin III + 2 H(+) = coproporphyrin III + Fe(2+). It participates in porphyrin-containing compound metabolism; protoheme biosynthesis. Involved in coproporphyrin-dependent heme b biosynthesis. Catalyzes the insertion of ferrous iron into coproporphyrin III to form Fe-coproporphyrin III. This chain is Coproporphyrin III ferrochelatase 2, found in Bacillus thuringiensis subsp. konkukian (strain 97-27).